A 272-amino-acid chain; its full sequence is Shikimate dehydrogenase (NADP(+)) (272 aa).

Shikimate-binding positions include 14–16 (SKS) and threonine 61. Lysine 65 acts as the Proton acceptor in catalysis. Glutamate 77 is a binding site for NADP(+). Residues asparagine 86 and aspartate 102 each coordinate shikimate. Residues 126–130 (GAGGA), 149–154 (NRTQEK), and methionine 213 contribute to the NADP(+) site. Tyrosine 215 serves as a coordination point for shikimate. Position 237 (glycine 237) interacts with NADP(+).

The protein belongs to the shikimate dehydrogenase family. As to quaternary structure, homodimer.

The catalysed reaction is shikimate + NADP(+) = 3-dehydroshikimate + NADPH + H(+). It functions in the pathway metabolic intermediate biosynthesis; chorismate biosynthesis; chorismate from D-erythrose 4-phosphate and phosphoenolpyruvate: step 4/7. Involved in the biosynthesis of the chorismate, which leads to the biosynthesis of aromatic amino acids. Catalyzes the reversible NADPH linked reduction of 3-dehydroshikimate (DHSA) to yield shikimate (SA). The protein is Shikimate dehydrogenase (NADP(+)) of Erwinia tasmaniensis (strain DSM 17950 / CFBP 7177 / CIP 109463 / NCPPB 4357 / Et1/99).